A 382-amino-acid chain; its full sequence is Leucoanthocyanidin reductase (382 aa).

Residues 19-25 (GGTGFIG), arginine 44, and lysine 52 each bind NADP(+). Lysine 142 functions as the Proton acceptor in the catalytic mechanism. Arginine 146 is a binding site for NADP(+).

This sequence belongs to the NmrA-type oxidoreductase family. Isoflavone reductase subfamily. As to quaternary structure, monomer.

It carries out the reaction (2R,3S)-catechin + NADP(+) + H2O = (2R,3S,4S)-leucocyanidin + NADPH + H(+). The protein operates within flavonoid metabolism; proanthocyanidin biosynthesis. Functionally, catalyzes the synthesis of catechin from 3,4-cis-leucocyanidin. Also synthesizes afzelechin and gallocatechin. The polypeptide is Leucoanthocyanidin reductase (LAR) (Desmodium uncinatum (Silverleaf Spanish clover)).